The chain runs to 603 residues: NADH-quinone oxidoreductase subunit C/D (603 aa).

Residues 1–193 (MVNNMTDLTA…DPFTLTKQKE (193 aa)) form an NADH dehydrogenase I subunit C region. The interval 217–603 (DFMFLNLGPN…IDFVMSDVDR (387 aa)) is NADH dehydrogenase I subunit D.

In the N-terminal section; belongs to the complex I 30 kDa subunit family. The protein in the C-terminal section; belongs to the complex I 49 kDa subunit family. As to quaternary structure, NDH-1 is composed of 13 different subunits. Subunits NuoB, CD, E, F, and G constitute the peripheral sector of the complex.

The protein resides in the cell inner membrane. It catalyses the reaction a quinone + NADH + 5 H(+)(in) = a quinol + NAD(+) + 4 H(+)(out). NDH-1 shuttles electrons from NADH, via FMN and iron-sulfur (Fe-S) centers, to quinones in the respiratory chain. The immediate electron acceptor for the enzyme in this species is believed to be ubiquinone. Couples the redox reaction to proton translocation (for every two electrons transferred, four hydrogen ions are translocated across the cytoplasmic membrane), and thus conserves the redox energy in a proton gradient. This chain is NADH-quinone oxidoreductase subunit C/D, found in Cronobacter sakazakii (strain ATCC BAA-894) (Enterobacter sakazakii).